We begin with the raw amino-acid sequence, 325 residues long: MARPLSDRTPGPLLLGGPAGAPPGGGALLGLRSLLQGNSKPKEPASCLLKEKERKATLPSAPVPGPGLETAGPADAPSGAVSGGGSPRGRSGPVAGPSLFAPLLWERTLPFGDVEYVDLDAFLLEHGLPPSPPPPGGLSPAPSPARTPAPSPGPGSCSSSSPRSSPGHAPARATLGAAGGHRAGLTSRDTPSPVDPDTVEVLMTFEPDPADLALSSIPGHETFDPRRHRFSEEELKPQPIMKKARKVQVPEEQKDEKYWSRRYKNNEAAKRSRDARRLKENQISVRAAFLEKENALLRQEVVAVRQELSHYRAVLSRYQAQHGTL.

3 disordered regions span residues 1–98 (MARP…AGPS), 124–203 (LEHG…EVLM), and 230–256 (FSEEELKPQPIMKKARKVQVPEEQKDE). Positions 17–28 (GPAGAPPGGGAL) are enriched in gly residues. Residues 71 to 80 (AGPADAPSGA) are compositionally biased toward low complexity. S86 is modified (phosphoserine). A compositionally biased stretch (low complexity) spans 88-98 (RGRSGPVAGPS). Residues 129-153 (PPSPPPPGGLSPAPSPARTPAPSPG) show a composition bias toward pro residues. The span at 154 to 171 (PGSCSSSSPRSSPGHAPA) shows a compositional bias: low complexity. Residues 255–318 (DEKYWSRRYK…SHYRAVLSRY (64 aa)) form the bZIP domain. The basic motif stretch occupies residues 257-279 (KYWSRRYKNNEAAKRSRDARRLK). The tract at residues 283–297 (ISVRAAFLEKENALL) is leucine-zipper.

The protein belongs to the bZIP family. PAR subfamily. As to quaternary structure, binds DNA as a homodimer or a heterodimer. Can form a heterodimer with TEF. In terms of tissue distribution, expressed in the suprachiasmatic nuclei (SCN) and in most peripheral tissues, with a strong circadian rhythmicity.

The protein localises to the nucleus. Functionally, this transcriptional activator recognizes and binds to the sequence 5'-RTTAYGTAAY-3' found in the promoter of genes such as albumin, CYP2A4 and CYP2A5. It is not essential for circadian rhythm generation, but modulates important clock output genes. May be a direct target for regulation by the circadian pacemaker component clock. May affect circadian period and sleep regulation. In Mus musculus (Mouse), this protein is D site-binding protein (Dbp).